The chain runs to 196 residues: V-type proton ATPase subunit E (196 aa).

The protein belongs to the V-ATPase E subunit family.

In terms of biological role, produces ATP from ADP in the presence of a proton gradient across the membrane. This chain is V-type proton ATPase subunit E, found in Clostridium botulinum (strain Alaska E43 / Type E3).